The chain runs to 137 residues: MATIHVDVVSAEQEIFSGDAKFVALPGEAGELGILPGHTPLITRIKPGAVRIETEAGEEFVFVAGGILEVQPKHVTVLADTAIRGHDLDEAKANEAKRAAEEALQNQSSDLDLARAQGELAVATAQLAAIARLRRKR.

This sequence belongs to the ATPase epsilon chain family. F-type ATPases have 2 components, CF(1) - the catalytic core - and CF(0) - the membrane proton channel. CF(1) has five subunits: alpha(3), beta(3), gamma(1), delta(1), epsilon(1). CF(0) has three main subunits: a, b and c.

It is found in the cell inner membrane. Produces ATP from ADP in the presence of a proton gradient across the membrane. The polypeptide is ATP synthase epsilon chain 1 (atpC1) (Ralstonia nicotianae (strain ATCC BAA-1114 / GMI1000) (Ralstonia solanacearum)).